Reading from the N-terminus, the 228-residue chain is Small ribosomal subunit protein uS3 (228 aa).

Residues valine 39 to arginine 107 form the KH type-2 domain.

The protein belongs to the universal ribosomal protein uS3 family. In terms of assembly, part of the 30S ribosomal subunit. Forms a tight complex with proteins S10 and S14.

Binds the lower part of the 30S subunit head. Binds mRNA in the 70S ribosome, positioning it for translation. This is Small ribosomal subunit protein uS3 from Stutzerimonas stutzeri (strain A1501) (Pseudomonas stutzeri).